The primary structure comprises 525 residues: Ubiquitin carboxyl-terminal hydrolase 22 (525 aa).

The segment at 21–138 adopts a UBP-type zinc-finger fold; that stretch reads PGCSHLGSFK…KEEQRKAWKM (118 aa). Zn(2+)-binding residues include Cys-23, His-25, Cys-63, Cys-66, Cys-76, Cys-79, Cys-84, His-89, His-93, His-99, Cys-112, and Cys-115. At Lys-129 the chain carries N6-acetyllysine. Thr-147 is subject to Phosphothreonine. The 345-residue stretch at 176-520 folds into the USP domain; the sequence is RGLINLGNTC…EGYLLFYHKQ (345 aa). The active-site Nucleophile is Cys-185. The residue at position 237 (Ser-237) is a Phosphoserine. His-479 functions as the Proton acceptor in the catalytic mechanism.

This sequence belongs to the peptidase C19 family. UBP8 subfamily. Component of some SAGA transcription coactivator-HAT complexes, at least composed of ATXN7, ATXN7L3, ENY2, GCN5L2, SUPT3H, TAF10, TRRAP and USP22. Within the SAGA complex, ATXN7L3, ENY2 and USP22 form a subcomplex required for histone deubiquitination. Interacts directly with ATXN7L3; leading to its recruitment to the SAGA complex. Interacts with ATXN7L3 and weakly with ATXN7L3B. Interacts with MED1. Post-translationally, phosphorylated in G2/M phase, but not in G1 phase by CDK1. In terms of processing, ubiquitinated and subsequently degraded in a CDC20-dependent manner. As to expression, highly expressed in brain and weakly in other organs.

The protein resides in the nucleus. It localises to the cytoplasm. The enzyme catalyses Thiol-dependent hydrolysis of ester, thioester, amide, peptide and isopeptide bonds formed by the C-terminal Gly of ubiquitin (a 76-residue protein attached to proteins as an intracellular targeting signal).. Its function is as follows. Deubiquitinase that plays a role in several cellular processes including transcriptional regulation, cell cycle progression or innate immunity. As part of the transcription regulatory histone acetylation (HAT) complex SAGA, catalyzes the deubiquitination of both histones H2A and H2B, thereby acting as a transcriptional coactivator. Recruited to specific gene promoters by activators such as MYC, where it is required for transcription. Facilitates cell-cycle progression by stabilizing CCNB1 and antagonizing its proteasome-mediated degradation in a cell cycle-specific manner. Modulates cell cycle progression and apoptosis also by antagonizing TP53 transcriptional activation through deacetylase SIRT1 stabilization. Plays multiple roles in immunity and inflammation. Participates in antiviral response by deubiquitinating the importin KPNA2, leading to IRF3 nuclear translocation and subsequent type I interferon production. Acts as a central regulator of type III IFN signaling by negatively regulating STING1 activation and ubiquitination. Inhibits NLRP3 inflammasome activation by promoting NLRP3 degradation through ATG5-dependent autophagy. Deubiquitinates CD274 to induce its stabilization and thereby participates in maintenance of immune tolerance to self. Controls necroptotic cell death by regulating RIPK3 phosphorylation and ubiquitination. During bacterial infection, promotes pro-inflammatory response by targeting TRAF6 and removing its 'Lys-48'-linked polyubiquitination. The polypeptide is Ubiquitin carboxyl-terminal hydrolase 22 (Usp22) (Mus musculus (Mouse)).